We begin with the raw amino-acid sequence, 241 residues long: Pyridoxal phosphate phosphatase PHOSPHO2 (241 aa).

Asp8 acts as the Nucleophile in catalysis. Positions 8 and 10 each coordinate Mg(2+). Asp10 functions as the Proton donor in the catalytic mechanism. Substrate-binding residues include Asp19 and Asp99. Asp179 lines the Mg(2+) pocket.

The protein belongs to the HAD-like hydrolase superfamily. PHOSPHO family. Mg(2+) is required as a cofactor.

It catalyses the reaction pyridoxal 5'-phosphate + H2O = pyridoxal + phosphate. Phosphatase that has high activity toward pyridoxal 5'-phosphate (PLP). Also active at much lower level toward pyrophosphate, phosphoethanolamine (PEA), phosphocholine (PCho), phospho-l-tyrosine, fructose-6-phosphate, p-nitrophenyl phosphate, and h-glycerophosphate. The sequence is that of Pyridoxal phosphate phosphatase PHOSPHO2 (PHOSPHO2) from Bos taurus (Bovine).